A 597-amino-acid chain; its full sequence is Protein disulfide isomerase-like 1-4 (597 aa).

Positions 1-25 (MAFRVLLLFSLTALLIFSAVSPSFA) are cleaved as a signal peptide. Composition is skewed to acidic residues over residues 37–49 (LSFLEDLKEDDVP) and 61–84 (DEFEGGEEEDPDMYNDDDDEEGDF). The tract at residues 37–101 (LSFLEDLKED…SDPLPTPEID (65 aa)) is disordered. The Thioredoxin 1 domain occupies 85–208 (SDLGNPDSDP…IVTWVKKKIG (124 aa)). Asparagine 112 carries N-linked (GlcNAc...) asparagine glycosylation. Catalysis depends on nucleophile residues cysteine 132 and cysteine 135. Cysteine 132 and cysteine 135 are disulfide-bonded. N-linked (GlcNAc...) asparagine glycosylation is found at asparagine 213 and asparagine 342. The Thioredoxin 2 domain occupies 429–550 (FYKSDPIPEK…FYKFLRKHAT (122 aa)). Active-site nucleophile residues include cysteine 471 and cysteine 474. A disulfide bond links cysteine 471 and cysteine 474. The N-linked (GlcNAc...) asparagine glycan is linked to asparagine 524. Residues 555–597 (LEKPASTESPKTAESTPKVETTETKESPDSTTKSSQSDSKDEL) are disordered. Residues 560–573 (STESPKTAESTPKV) show a composition bias toward polar residues. The Prevents secretion from ER signature appears at 594–597 (KDEL).

It belongs to the protein disulfide isomerase family. As to quaternary structure, interacts with MEE8 and MED37A. Expressed in germinating seedling, including the cotyledons and hypocotyl, in vascular tissues, in pollen grains, root tips, leaf trichomes, developing seeds and siliques.

It is found in the endoplasmic reticulum lumen. The protein resides in the golgi apparatus. The protein localises to the vacuole. Its subcellular location is the nucleus. It localises to the secreted. It is found in the cell wall. The catalysed reaction is Catalyzes the rearrangement of -S-S- bonds in proteins.. Acts as a protein-folding catalyst that interacts with nascent polypeptides to catalyze the formation, isomerization, and reduction or oxidation of disulfide bonds. This chain is Protein disulfide isomerase-like 1-4 (PDIL1-4), found in Arabidopsis thaliana (Mouse-ear cress).